Here is a 144-residue protein sequence, read N- to C-terminus: Large ribosomal subunit protein uL13 (144 aa).

It belongs to the universal ribosomal protein uL13 family. Part of the 50S ribosomal subunit.

In terms of biological role, this protein is one of the early assembly proteins of the 50S ribosomal subunit, although it is not seen to bind rRNA by itself. It is important during the early stages of 50S assembly. This is Large ribosomal subunit protein uL13 from Clostridium perfringens (strain 13 / Type A).